We begin with the raw amino-acid sequence, 365 residues long: tRNA/tmRNA (uracil-C(5))-methyltransferase (365 aa).

Residues Gln189, Tyr217, Asn222, Glu238, and Asp298 each contribute to the S-adenosyl-L-methionine site. Cys323 acts as the Nucleophile in catalysis. Glu357 acts as the Proton acceptor in catalysis.

Belongs to the class I-like SAM-binding methyltransferase superfamily. RNA M5U methyltransferase family. TrmA subfamily.

It carries out the reaction uridine(54) in tRNA + S-adenosyl-L-methionine = 5-methyluridine(54) in tRNA + S-adenosyl-L-homocysteine + H(+). It catalyses the reaction uridine(341) in tmRNA + S-adenosyl-L-methionine = 5-methyluridine(341) in tmRNA + S-adenosyl-L-homocysteine + H(+). Functionally, dual-specificity methyltransferase that catalyzes the formation of 5-methyluridine at position 54 (m5U54) in all tRNAs, and that of position 341 (m5U341) in tmRNA (transfer-mRNA). This is tRNA/tmRNA (uracil-C(5))-methyltransferase from Shewanella woodyi (strain ATCC 51908 / MS32).